The chain runs to 151 residues: Large ribosomal subunit protein bL9 (151 aa).

The protein belongs to the bacterial ribosomal protein bL9 family.

In terms of biological role, binds to the 23S rRNA. This Rhodococcus erythropolis (strain PR4 / NBRC 100887) protein is Large ribosomal subunit protein bL9.